The following is a 570-amino-acid chain: Sulfite reductase [NADPH] hemoprotein beta-component (570 aa).

4 residues coordinate [4Fe-4S] cluster: Cys434, Cys440, Cys479, and Cys483. Residue Cys483 coordinates siroheme.

This sequence belongs to the nitrite and sulfite reductase 4Fe-4S domain family. In terms of assembly, alpha(8)-beta(8). The alpha component is a flavoprotein, the beta component is a hemoprotein. Siroheme serves as cofactor. It depends on [4Fe-4S] cluster as a cofactor.

The enzyme catalyses hydrogen sulfide + 3 NADP(+) + 3 H2O = sulfite + 3 NADPH + 4 H(+). Its pathway is sulfur metabolism; hydrogen sulfide biosynthesis; hydrogen sulfide from sulfite (NADPH route): step 1/1. Functionally, component of the sulfite reductase complex that catalyzes the 6-electron reduction of sulfite to sulfide. This is one of several activities required for the biosynthesis of L-cysteine from sulfate. This is Sulfite reductase [NADPH] hemoprotein beta-component from Salmonella enteritidis PT4 (strain P125109).